The chain runs to 148 residues: 3-dehydroquinate dehydratase (148 aa).

Tyr-23 functions as the Proton acceptor in the catalytic mechanism. The substrate site is built by Asn-75, His-81, and Asp-88. Residue His-101 is the Proton donor of the active site. Residues 102 to 103 and Arg-112 contribute to the substrate site; that span reads MS.

The protein belongs to the type-II 3-dehydroquinase family. As to quaternary structure, homododecamer.

It catalyses the reaction 3-dehydroquinate = 3-dehydroshikimate + H2O. The protein operates within metabolic intermediate biosynthesis; chorismate biosynthesis; chorismate from D-erythrose 4-phosphate and phosphoenolpyruvate: step 3/7. Functionally, catalyzes a trans-dehydration via an enolate intermediate. This chain is 3-dehydroquinate dehydratase, found in Syntrophotalea carbinolica (strain DSM 2380 / NBRC 103641 / GraBd1) (Pelobacter carbinolicus).